The chain runs to 300 residues: Ribosomal protein L11 methyltransferase (300 aa).

Residues threonine 152, glycine 173, aspartate 195, and asparagine 234 each coordinate S-adenosyl-L-methionine.

It belongs to the methyltransferase superfamily. PrmA family.

Its subcellular location is the cytoplasm. The catalysed reaction is L-lysyl-[protein] + 3 S-adenosyl-L-methionine = N(6),N(6),N(6)-trimethyl-L-lysyl-[protein] + 3 S-adenosyl-L-homocysteine + 3 H(+). Methylates ribosomal protein L11. This is Ribosomal protein L11 methyltransferase from Cupriavidus necator (strain ATCC 17699 / DSM 428 / KCTC 22496 / NCIMB 10442 / H16 / Stanier 337) (Ralstonia eutropha).